We begin with the raw amino-acid sequence, 270 residues long: 4-hydroxy-tetrahydrodipicolinate reductase (270 aa).

Residues 8–13 and Glu-34 each bind NAD(+); that span reads GAAGRM. Residue Arg-35 participates in NADP(+) binding. NAD(+) contacts are provided by residues 98–100 and 122–125; these read GST and SPNM. His-155 serves as the catalytic Proton donor/acceptor. His-156 serves as a coordination point for (S)-2,3,4,5-tetrahydrodipicolinate. Residue Lys-159 is the Proton donor of the active site. 165 to 166 is a (S)-2,3,4,5-tetrahydrodipicolinate binding site; that stretch reads GT.

It belongs to the DapB family.

It localises to the cytoplasm. The catalysed reaction is (S)-2,3,4,5-tetrahydrodipicolinate + NAD(+) + H2O = (2S,4S)-4-hydroxy-2,3,4,5-tetrahydrodipicolinate + NADH + H(+). It catalyses the reaction (S)-2,3,4,5-tetrahydrodipicolinate + NADP(+) + H2O = (2S,4S)-4-hydroxy-2,3,4,5-tetrahydrodipicolinate + NADPH + H(+). It participates in amino-acid biosynthesis; L-lysine biosynthesis via DAP pathway; (S)-tetrahydrodipicolinate from L-aspartate: step 4/4. In terms of biological role, catalyzes the conversion of 4-hydroxy-tetrahydrodipicolinate (HTPA) to tetrahydrodipicolinate. The polypeptide is 4-hydroxy-tetrahydrodipicolinate reductase (Anaeromyxobacter dehalogenans (strain 2CP-1 / ATCC BAA-258)).